A 231-amino-acid chain; its full sequence is Small ribosomal subunit protein uS3 (231 aa).

One can recognise a KH type-2 domain in the interval 39–107 (IRKYIVENLP…DVKLNIVEIR (69 aa)).

The protein belongs to the universal ribosomal protein uS3 family. Part of the 30S ribosomal subunit. Forms a tight complex with proteins S10 and S14.

Functionally, binds the lower part of the 30S subunit head. Binds mRNA in the 70S ribosome, positioning it for translation. This Novosphingobium aromaticivorans (strain ATCC 700278 / DSM 12444 / CCUG 56034 / CIP 105152 / NBRC 16084 / F199) protein is Small ribosomal subunit protein uS3.